A 279-amino-acid chain; its full sequence is MAAAFDPSGRLPDLFTSAGTSSFSAFLSMAAPELLPGRRPLPPGTAADLTPHATTIVAIAAAGGVVMAGDRRATMGNLIAQRDIEKVYPADAYSLVGMAGAAGIGIELIRLFQVELEHYEKIEGAMLSLDGKANRLAAMVRGNLGAAMQGLAVVPMFAGFDLAANDPVKAGRIFSFDVTGGPYEETGYDAVGSGSLFAKSALKKRFRVGLSVDDAMRLAVEALYDAADDDTATGGPDLTRRIYPVVMTVTAEGTHRLTEAETAAIAENVVAGRMENPGG.

Residues 1-53 (MAAAFDPSGRLPDLFTSAGTSSFSAFLSMAAPELLPGRRPLPPGTAADLTPHA) constitute a propeptide, removed in mature form; by autocatalysis. Residue Thr-54 is the Nucleophile of the active site.

This sequence belongs to the peptidase T1B family. In terms of assembly, the 20S proteasome core is composed of 14 alpha and 14 beta subunits that assemble into four stacked heptameric rings, resulting in a barrel-shaped structure. The two inner rings, each composed of seven catalytic beta subunits, are sandwiched by two outer rings, each composed of seven alpha subunits. The catalytic chamber with the active sites is on the inside of the barrel. Has a gated structure, the ends of the cylinder being occluded by the N-termini of the alpha-subunits. Is capped by the proteasome-associated ATPase, ARC.

The protein resides in the cytoplasm. It carries out the reaction Cleavage of peptide bonds with very broad specificity.. It participates in protein degradation; proteasomal Pup-dependent pathway. With respect to regulation, the formation of the proteasomal ATPase ARC-20S proteasome complex, likely via the docking of the C-termini of ARC into the intersubunit pockets in the alpha-rings, may trigger opening of the gate for substrate entry. Interconversion between the open-gate and close-gate conformations leads to a dynamic regulation of the 20S proteasome proteolysis activity. Functionally, component of the proteasome core, a large protease complex with broad specificity involved in protein degradation. The protein is Proteasome subunit beta of Salinispora arenicola (strain CNS-205).